Reading from the N-terminus, the 63-residue chain is Laccase-C1 (63 aa).

Belongs to the multicopper oxidase family. As to quaternary structure, monomer. The cofactor is Cu cation. Glycosylated; contains 16% carbohydrates.

Its subcellular location is the secreted. It catalyses the reaction 4 hydroquinone + O2 = 4 benzosemiquinone + 2 H2O. Its activity is regulated as follows. Inhibited by sodium azide. Its function is as follows. Lignin degradation and detoxification of lignin-derived products. Oxidation of a broad range of substrates including mono-, di- and polyphenols, aromatic amines and methoxy-substituted phenols accompanied by reduction of oxygen to water. The chain is Laccase-C1 from Cerrena unicolor (Canker rot fungus).